The chain runs to 248 residues: Probable transcriptional regulatory protein Nham_3525 (248 aa).

Residues 1 to 21 (MAGHSQFKNIMHRKGRQDAQK) are disordered.

It belongs to the TACO1 family.

Its subcellular location is the cytoplasm. This chain is Probable transcriptional regulatory protein Nham_3525, found in Nitrobacter hamburgensis (strain DSM 10229 / NCIMB 13809 / X14).